Here is a 274-residue protein sequence, read N- to C-terminus: Non-structural protein 4 (274 aa).

It belongs to the aquareoviridae NS4 protein family.

The chain is Non-structural protein 4 (S7) from Notemigonus crysoleucas (Golden shiner).